A 100-amino-acid chain; its full sequence is Integration host factor subunit alpha (100 aa).

The protein belongs to the bacterial histone-like protein family. As to quaternary structure, heterodimer of an alpha and a beta chain.

This protein is one of the two subunits of integration host factor, a specific DNA-binding protein that functions in genetic recombination as well as in transcriptional and translational control. This Hahella chejuensis (strain KCTC 2396) protein is Integration host factor subunit alpha.